We begin with the raw amino-acid sequence, 294 residues long: DEP domain-containing protein 4 (294 aa).

A DEP domain is found at 71–162 (LQAQVEIKRR…SNISLYRFLG (92 aa)).

This is DEP domain-containing protein 4 (DEPDC4) from Homo sapiens (Human).